The following is a 354-amino-acid chain: UDP-N-acetylglucosamine--N-acetylmuramyl-(pentapeptide) pyrophosphoryl-undecaprenol N-acetylglucosamine transferase (354 aa).

UDP-N-acetyl-alpha-D-glucosamine contacts are provided by residues 15–17 (TGG), Asn-127, Arg-163, Ser-191, Ile-244, 263–268 (ALTVSE), and Gln-288.

Belongs to the glycosyltransferase 28 family. MurG subfamily.

Its subcellular location is the cell inner membrane. The catalysed reaction is di-trans,octa-cis-undecaprenyl diphospho-N-acetyl-alpha-D-muramoyl-L-alanyl-D-glutamyl-meso-2,6-diaminopimeloyl-D-alanyl-D-alanine + UDP-N-acetyl-alpha-D-glucosamine = di-trans,octa-cis-undecaprenyl diphospho-[N-acetyl-alpha-D-glucosaminyl-(1-&gt;4)]-N-acetyl-alpha-D-muramoyl-L-alanyl-D-glutamyl-meso-2,6-diaminopimeloyl-D-alanyl-D-alanine + UDP + H(+). It participates in cell wall biogenesis; peptidoglycan biosynthesis. Its function is as follows. Cell wall formation. Catalyzes the transfer of a GlcNAc subunit on undecaprenyl-pyrophosphoryl-MurNAc-pentapeptide (lipid intermediate I) to form undecaprenyl-pyrophosphoryl-MurNAc-(pentapeptide)GlcNAc (lipid intermediate II). The polypeptide is UDP-N-acetylglucosamine--N-acetylmuramyl-(pentapeptide) pyrophosphoryl-undecaprenol N-acetylglucosamine transferase (Vibrio cholerae serotype O1 (strain ATCC 39315 / El Tor Inaba N16961)).